Here is a 1065-residue protein sequence, read N- to C-terminus: Tubulin glycylase 3C (1065 aa).

Disordered regions lie at residues 1 to 146, 158 to 182, 301 to 326, 341 to 360, 381 to 482, and 708 to 755; these read MSSL…REDK, IREQ…TKSK, STQK…DIAK, EKKR…KEQL, FFVD…GNGS, and NKQK…EKQM. Residues 23–53 are compositionally biased toward low complexity; sequence QEGNQEDLNNQNDHNLNNNELDSLSSPPSDN. Residues 54–63 are compositionally biased toward acidic residues; the sequence is YNEEEFEQED. Polar residues predominate over residues 73 to 92; it reads QNASQNNISQTQRISQTQLP. A compositionally biased stretch (basic and acidic residues) spans 122 to 146; that stretch reads LMEKKKKEQEEKEKKELKLKKREDK. Residues 166–179 are compositionally biased toward polar residues; sequence LESQTEQSDHSNVT. Positions 313-326 are enriched in basic and acidic residues; sequence EGDKEKDDKKDIAK. Over residues 385–403 the composition is skewed to basic and acidic residues; sequence VPEKKPKKEKKKNESKEDN. Positions 404–423 are enriched in polar residues; sequence IQITSPKLNSTKSLSSQITR. Residues 424 to 450 are compositionally biased toward basic and acidic residues; that stretch reads KTNDAKKVEKLPKIKDSNKENHSKERN. Acidic residues predominate over residues 451-479; sequence EDNEEGDDGEYECDEGDEGASDGEDEDDG. One can recognise a TTL domain in the interval 633–1009; the sequence is YFEKDPDIEK…DYGMEKSKKA (377 aa). Residues 709-721 are compositionally biased toward basic residues; that stretch reads KQKPKKKKKKSKK. The span at 722–733 shows a compositional bias: basic and acidic residues; the sequence is DKQQGDTEKKEE. Acidic residues predominate over residues 734–754; the sequence is EEGEAEDEEEDEEDEEEEEKQ. ATP-binding positions include 821–824, lysine 834, and aspartate 836; that span reads QKYI.

The protein resides in the cell projection. The protein localises to the cilium. It is found in the cytoplasm. Its subcellular location is the cytoskeleton. It localises to the cilium axoneme. Functionally, probable glycylase which modifies tubulin, generating side chains of glycine on the gamma-carboxyl groups of specific glutamate residues within the C-terminal tail of tubulin. This chain is Tubulin glycylase 3C (TTLL3C), found in Tetrahymena thermophila (strain SB210).